The primary structure comprises 429 residues: Gamma-glutamyl phosphate reductase (429 aa).

The protein belongs to the gamma-glutamyl phosphate reductase family.

Its subcellular location is the cytoplasm. It carries out the reaction L-glutamate 5-semialdehyde + phosphate + NADP(+) = L-glutamyl 5-phosphate + NADPH + H(+). It functions in the pathway amino-acid biosynthesis; L-proline biosynthesis; L-glutamate 5-semialdehyde from L-glutamate: step 2/2. Functionally, catalyzes the NADPH-dependent reduction of L-glutamate 5-phosphate into L-glutamate 5-semialdehyde and phosphate. The product spontaneously undergoes cyclization to form 1-pyrroline-5-carboxylate. This is Gamma-glutamyl phosphate reductase from Nocardioides sp. (strain ATCC BAA-499 / JS614).